The chain runs to 75 residues: Transaldolase (75 aa).

Belongs to the transaldolase family. Type 1 subfamily. Homodimer. In terms of processing, phosphorylated. In terms of tissue distribution, predominantly expressed in Y-organs.

It is found in the cytoplasm. The enzyme catalyses D-sedoheptulose 7-phosphate + D-glyceraldehyde 3-phosphate = D-erythrose 4-phosphate + beta-D-fructose 6-phosphate. It functions in the pathway carbohydrate degradation; pentose phosphate pathway; D-glyceraldehyde 3-phosphate and beta-D-fructose 6-phosphate from D-ribose 5-phosphate and D-xylulose 5-phosphate (non-oxidative stage): step 2/3. In terms of biological role, transaldolase is important for the balance of metabolites in the pentose-phosphate pathway. May play a role in the conversion of sterols into ecdysteroids via NADPH. This is Transaldolase from Carcinus maenas (Common shore crab).